Here is a 452-residue protein sequence, read N- to C-terminus: Elongation factor Tu, mitochondrial (452 aa).

A mitochondrion-targeting transit peptide spans 1–43 (MAAATLLRATPLFSGLGAGPAPLLQGLLRPLKAQALPVLCRGL). The region spanning 55–251 (KPHVNVGTIG…AVDTYIPVPT (197 aa)) is the tr-type G domain. Residues 64–71 (GHVDHGKT) are G1. The GTP site is built by D67, G69, K70, T71, and T72. T71 lines the Mg(2+) pocket. K79 bears the N6-acetyllysine mark. K88 is subject to N6-acetyllysine; alternate. K88 carries the post-translational modification N6-succinyllysine; alternate. The segment at 105–109 (GITIN) is G2. Residues 126-129 (DCPG) are G3. GTP-binding residues include N181, D184, S219, A220, and L221. Positions 181–184 (NKAD) are G4. The interval 219-221 (SAL) is G5. K234 is subject to N6-succinyllysine. K256 carries the N6-acetyllysine modification. At T278 the chain carries Phosphothreonine. Position 286 is an N6-succinyllysine (K286). S312 carries the phosphoserine modification. N6-acetyllysine occurs at positions 361 and 418.

It belongs to the TRAFAC class translation factor GTPase superfamily. Classic translation factor GTPase family. EF-Tu/EF-1A subfamily. Interacts with NLRX1. Interacts with ATG16L1.

It localises to the mitochondrion. It catalyses the reaction GTP + H2O = GDP + phosphate + H(+). Functionally, GTP hydrolase that promotes the GTP-dependent binding of aminoacyl-tRNA to the A-site of ribosomes during protein biosynthesis. Also plays a role in the regulation of autophagy and innate immunity. Recruits ATG5-ATG12 and NLRX1 at mitochondria and serves as a checkpoint of the RIGI-MAVS pathway. In turn, inhibits RLR-mediated type I interferon while promoting autophagy. This is Elongation factor Tu, mitochondrial (TUFM) from Bos taurus (Bovine).